The sequence spans 311 residues: Glycerol-3-phosphate dehydrogenase [NAD(P)+] (311 aa).

The NADPH site is built by Trp-12, Arg-31, Arg-32, and Lys-96. Residues Lys-96, Gly-124, and Ser-126 each contribute to the sn-glycerol 3-phosphate site. Ala-128 is a binding site for NADPH. Residues Lys-178, Asp-231, Ser-241, Arg-242, and Asn-243 each coordinate sn-glycerol 3-phosphate. Lys-178 serves as the catalytic Proton acceptor. Arg-242 serves as a coordination point for NADPH. Residues Val-266 and Glu-268 each contribute to the NADPH site.

It belongs to the NAD-dependent glycerol-3-phosphate dehydrogenase family.

Its subcellular location is the cytoplasm. It carries out the reaction sn-glycerol 3-phosphate + NAD(+) = dihydroxyacetone phosphate + NADH + H(+). It catalyses the reaction sn-glycerol 3-phosphate + NADP(+) = dihydroxyacetone phosphate + NADPH + H(+). The protein operates within membrane lipid metabolism; glycerophospholipid metabolism. Functionally, catalyzes the reduction of the glycolytic intermediate dihydroxyacetone phosphate (DHAP) to sn-glycerol 3-phosphate (G3P), the key precursor for phospholipid synthesis. The sequence is that of Glycerol-3-phosphate dehydrogenase [NAD(P)+] from Helicobacter hepaticus (strain ATCC 51449 / 3B1).